We begin with the raw amino-acid sequence, 351 residues long: MAAISGISSGTLTISRPLVTLRRSRAAVSYSSSHRLLHHLPLSSRRLLLRNNHRVQATILQDDEEKVVVEESFKAETSTGTEPLEEPNMSSSSTSAFETWIIKLEQGVNVFLTDSVIKILDTLYRDRTYARFFVLETIARVPYFAFMSVLHMYETFGWWRRADYLKVHFAESWNEMHHLLIMEELGGNSWWFDRFLAQHIATFYYFMTVFLYILSPRMAYHFSECVESHAYETYDKFLKASGEELKNMPAPDIAVKYYTGGDLYLFDEFQTSRTPNTRRPVIENLYDVFVNIRDDEAEHCKTMRACQTLGSLRSPHSILEDDDTEEESGCVVPEEAHCEGIVDCLKKSITS.

The N-terminal 56 residues, 1-56, are a transit peptide targeting the chloroplast and chromoplast; it reads MAAISGISSGTLTISRPLVTLRRSRAAVSYSSSHRLLHHLPLSSRRLLLRNNHRVQ. Positions 71-91 are disordered; it reads ESFKAETSTGTEPLEEPNMSS. A helical transmembrane segment spans residues 132 to 152; the sequence is FFVLETIARVPYFAFMSVLHM. Positions 136, 175, and 178 each coordinate Fe cation. A helical membrane pass occupies residues 195–215; sequence FLAQHIATFYYFMTVFLYILS. The Fe cation site is built by glutamate 227, glutamate 296, and histidine 299.

This sequence belongs to the alternative oxidase family. It depends on Fe cation as a cofactor. As to expression, ubiquitous.

It localises to the plastid. The protein resides in the chloroplast thylakoid membrane. The protein localises to the chromoplast membrane. It carries out the reaction 2 a ubiquinol + O2 = 2 a ubiquinone + 2 H2O. In terms of biological role, acts early in chloroplast biogenesis as a component of a redox chain responsible for phytoene desaturation. Prevents the generation of toxic oxygen radicals and photooxidation of the nascent photosynthetic apparatus. Involved in the differentiation of multiple plastid types, including chloroplasts, amyloplasts, and etioplasts. Might participate in the chloroplast respiratory chain. This is Ubiquinol oxidase 4, chloroplastic/chromoplastic (AOX4) from Arabidopsis thaliana (Mouse-ear cress).